A 364-amino-acid chain; its full sequence is MGVIHEETAYRKPVPGGDPGAGSGAADHRDSAGRLSRWEATGDVRNVAGTDQGRSVASGASRVGRVRGQELARGVRAGNGGSAGTSGVHRPEVGSGRQEKTGNQTMKTLVTANQKGGVGKTSTLVHLAFDFFERGLRVAVIDLDPQGNASYTLKDFATGLHASKLFGAVPAGGWTETAPAAGDGQAARLALIESNPVLANAERLSLDDARELFGANIKALANQGFDVCLIDTAPTLGVGLAAALFAADYVLSPIELEAYSIQGIKKMVTTIANVRQKNAKLQFLGMVPSKVDARNPRHARHQAELLAAYPKMMIPATVGLRSSIADALASGVPVWKIKKTAARKASKEVRALADYVFTKMEISQ.

Basic and acidic residues-rich tracts occupy residues 1 to 10 (MGVIHEETAY), 26 to 42 (ADHR…EATG), and 89 to 100 (HRPEVGSGRQEK). Disordered stretches follow at residues 1 to 63 (MGVI…ASRV) and 75 to 102 (VRAG…EKTG).

This sequence belongs to the ParA family.

Functionally, this is one of the proteins encoded by the trfB operon; it is involved in plasmid maintenance and replication. The polypeptide is Protein IncC (incC) (Escherichia coli).